Reading from the N-terminus, the 478-residue chain is Odorant receptor coreceptor (478 aa).

Over 1-43 (MMKMKQQGLVADLLPNIRVMKTFGHFVFNYYNDNSSKYLHKVY) the chain is Cytoplasmic. Residues 44 to 64 (CCVNLFMLLLQFGLCAVNLIV) form a helical membrane-spanning segment. At 65 to 73 (ESADVDDLT) the chain is on the extracellular side. Residues 74-94 (ANTITLLFFTHSIVKICYFAI) traverse the membrane as a helical segment. Residues 95 to 133 (RSKYFYRTWAIWNNPNSHPLFAESNARYHAIALKKMRLL) are Cytoplasmic-facing. The chain crosses the membrane as a helical span at residues 134-154 (LFLVGGTTMLAAVAWTVLTFF). Over 155–190 (EHPIRKIVDPVTNETEIIELPQLLIRSFYPFDAGKG) the chain is Extracellular. Residue N167 is glycosylated (N-linked (GlcNAc...) asparagine). A helical transmembrane segment spans residues 191–211 (ITHVLVLVYQFYWVLFMLIDA). Over 212–349 (NSLDVLFCSW…IVRLVTAVGD (138 aa)) the chain is Cytoplasmic. Positions 261–281 (SADHLRDGDNPPPPPPPQSDN) are disordered. Residues 350-370 (AYGFALLLHMLTTTITLTLLA) traverse the membrane as a helical segment. Residues 371–382 (YQATKVNGINVY) are Extracellular-facing. A helical transmembrane segment spans residues 383–403 (AASTIGYILYTFGQVFLFCIF). Topologically, residues 404 to 454 (GNRLIEESTSVMEAAYSCHWYDGSEEAKTFVQIVCQQCQKAMSISGAKFFT) are cytoplasmic. The chain crosses the membrane as a helical span at residues 455 to 475 (VSLDLFASVLGAVVTYFMVLV). Residues 476–478 (QLK) are Extracellular-facing.

The protein belongs to the insect chemoreceptor superfamily. Heteromeric odorant receptor channel (TC 1.A.69) family. Orco subfamily. In terms of assembly, heterodimer with conventional odorant receptors (ORs). Present in antennae (at protein level).

The protein resides in the cell membrane. Functionally, odorant coreceptor which complexes with conventional odorant receptors (ORs) to form odorant-sensing units, providing sensitive and prolonged odorant signaling and calcium permeability. Obligate coreceptor of all odorant receptors. Orco is a universal and integral part of the functional odorant receptor, involved in the dendritic localization of other olfactory receptors. Can form functional ion channels in the absence of an odor-binding odorant receptor. Plays a central role in the perception of olfactory stimuli in ants and is essential for ant social organization. Required for pheromone sensing. Also required for the development and maintenance of odorant receptor neurons (ORNs) and of antennal lobe glomeruli. The protein is Odorant receptor coreceptor of Ooceraea biroi (Clonal raider ant).